A 443-amino-acid chain; its full sequence is 23S rRNA (uracil(1939)-C(5))-methyltransferase RlmD (443 aa).

Positions 4–66 (QNRFDRTSFQ…RHFDEARVVE (63 aa)) constitute a TRAM domain. Positions 79, 85, 88, and 167 each coordinate [4Fe-4S] cluster. S-adenosyl-L-methionine is bound by residues glutamine 275, phenylalanine 304, asparagine 309, glutamate 325, aspartate 352, and aspartate 373. Residue cysteine 399 is the Nucleophile of the active site.

Belongs to the class I-like SAM-binding methyltransferase superfamily. RNA M5U methyltransferase family. RlmD subfamily.

It carries out the reaction uridine(1939) in 23S rRNA + S-adenosyl-L-methionine = 5-methyluridine(1939) in 23S rRNA + S-adenosyl-L-homocysteine + H(+). In terms of biological role, catalyzes the formation of 5-methyl-uridine at position 1939 (m5U1939) in 23S rRNA. This chain is 23S rRNA (uracil(1939)-C(5))-methyltransferase RlmD, found in Xylella fastidiosa (strain Temecula1 / ATCC 700964).